The sequence spans 88 residues: Large ribosomal subunit protein bL31B (88 aa).

This sequence belongs to the bacterial ribosomal protein bL31 family. Type B subfamily. As to quaternary structure, part of the 50S ribosomal subunit.

This is Large ribosomal subunit protein bL31B from Janthinobacterium sp. (strain Marseille) (Minibacterium massiliensis).